Here is a 327-residue protein sequence, read N- to C-terminus: Tetraacyldisaccharide 4'-kinase (327 aa).

54–61 is an ATP binding site; the sequence is TTGGTGKT. Residues 78-106 are disordered; the sequence is PHILSRGHGGRERGPIGVNPNRSTPRDVG.

Belongs to the LpxK family.

It carries out the reaction a lipid A disaccharide + ATP = a lipid IVA + ADP + H(+). The protein operates within glycolipid biosynthesis; lipid IV(A) biosynthesis; lipid IV(A) from (3R)-3-hydroxytetradecanoyl-[acyl-carrier-protein] and UDP-N-acetyl-alpha-D-glucosamine: step 6/6. Functionally, transfers the gamma-phosphate of ATP to the 4'-position of a tetraacyldisaccharide 1-phosphate intermediate (termed DS-1-P) to form tetraacyldisaccharide 1,4'-bis-phosphate (lipid IVA). This chain is Tetraacyldisaccharide 4'-kinase, found in Gluconobacter oxydans (strain 621H) (Gluconobacter suboxydans).